The primary structure comprises 1392 residues: DNA-directed RNA polymerase subunit beta' (1392 aa).

Residues Cys-70, Cys-72, Cys-85, and Cys-88 each coordinate Zn(2+). Mg(2+)-binding residues include Asp-460, Asp-462, and Asp-464. Zn(2+)-binding residues include Cys-810, Cys-884, Cys-891, and Cys-894.

It belongs to the RNA polymerase beta' chain family. The RNAP catalytic core consists of 2 alpha, 1 beta, 1 beta' and 1 omega subunit. When a sigma factor is associated with the core the holoenzyme is formed, which can initiate transcription. The cofactor is Mg(2+). Zn(2+) serves as cofactor.

The catalysed reaction is RNA(n) + a ribonucleoside 5'-triphosphate = RNA(n+1) + diphosphate. DNA-dependent RNA polymerase catalyzes the transcription of DNA into RNA using the four ribonucleoside triphosphates as substrates. The polypeptide is DNA-directed RNA polymerase subunit beta' (Geobacter metallireducens (strain ATCC 53774 / DSM 7210 / GS-15)).